A 760-amino-acid polypeptide reads, in one-letter code: METCGSPSPLPREPAGGVAMEDRARPLRALPRGQSPPPPLQTSSDAEVMDVGSGGDGQAEPPAEDPLNFYGASLLSKGSSSKARLLVDPNCSGHSPRTARHAPAVRKFSPDLKLLKDVKISVSFTESCRSEDRKVLYTGAERDVRAECGLALSPVIGDVHAGPFGGSVGNGVGAGGESAGKRDEEHELDQEKRVEYAVLDELEDFTDNLELDEEGAGGFTAKAIVQRDRVDEEALNFSYEDDFDNDVDALLEEGLCAPKKRRMEEKYGGDSDHPSDGETSVQPMMTKIKTVLKSRGRPPTEPLPDGWIMTFHNSGVPVYLHRESRVVTWSRPYFLGTGSIRKHGPPLTSIPCLHYRKMKDSEERERAAGIAPPEPELPPDEPDPLGTDAGPPDEKDPLGAEAAPGALGQVKAKVEVCKDESVDLEEFRNYLEKRFDFEQVTVKKFRTWAERRQFNREMKRKQAESERPILPANQKLITLSVQDAPTKKEFVINPNGKSEVCILHEYMQRVLKVRPVYSFFECENPSEPFGASVTIDGVTYGSGTASSKKLAKNKAARATLEILIPDFVKQTSEEKPRDSEELEYFNHISIEDSRVYELTSKAGLLSPYQILHECLKRNHGMGDTSIKFEVVPGKNQKSEYVMACGKHTVRGWCKNKRVGKQLASQKILQLLHPHVKNWGSLLRMYGRESSKMVKQETSDKSVIELQQFARKNKPNLHILSKLQEEMRRLAEEREETRKKPKMSIVASAQPGGEPLCTVDV.

The tract at residues 1 to 71 (METCGSPSPL…PAEDPLNFYG (71 aa)) is disordered. The tract at residues 1 to 275 (METCGSPSPL…KYGGDSDHPS (275 aa)) is necessary for nuclear localization and retention. Positions 1–342 (METCGSPSPL…YFLGTGSIRK (342 aa)) are necessary for interaction with NCL. Residues S35, S92, S95, S271, and S275 each carry the phosphoserine modification. Basic and acidic residues predominate over residues 263–276 (MEEKYGGDSDHPSD). The tract at residues 263 to 284 (MEEKYGGDSDHPSDGETSVQPM) is disordered. A necessary for heme-binding and pri-miRNA processing region spans residues 276 to 738 (DGETSVQPMM…LAEEREETRK (463 aa)). T279 is modified (phosphothreonine). The region spanning 301–334 (EPLPDGWIMTFHNSGVPVYLHRESRVVTWSRPYF) is the WW domain. C352 lines the heme pocket. Residues 361-405 (SEERERAAGIAPPEPELPPDEPDPLGTDAGPPDEKDPLGAEAAPG) are disordered. Residues K411 and K487 each participate in a glycyl lysine isopeptide (Lys-Gly) (interchain with G-Cter in SUMO2) cross-link. 2 DRBM domains span residues 498–565 (SEVC…ILIP) and 606–673 (SPYQ…LLHP). S664 is subject to Phosphoserine. Residues 688–760 (ESSKMVKQET…GGEPLCTVDV (73 aa)) are interaction with DROSHA. Residue K694 forms a Glycyl lysine isopeptide (Lys-Gly) (interchain with G-Cter in SUMO2) linkage. A disordered region spans residues 731–760 (EEREETRKKPKMSIVASAQPGGEPLCTVDV).

As to quaternary structure, monomer; in absence of heme. Homodimer; the association with heme promotes its dimerization. Component of the microprocessor complex, or pri-miRNA processing protein complex, which is composed of DROSHA and DGCR8. The microprocessor complex is a heterotrimer; each of the two DROSHA RNase III domains binds one DGCR8 (via C-terminal region). Interacts with ILF3, NCL and DROSHA. Interacts with CPSF3 and ISY1; this interaction is in an RNA dependent manner. Interacts with PUS10; interaction promotes pri-miRNAs processing. Requires heme as cofactor. Post-translationally, phosphorylated at Ser-664 by ATM upon radiation, which is crucial for its stability. In terms of processing, ubiquitinated, leading to degradation in a proteasome-dependent manner. Deubiquitinated by USP51, leading to stabilization.

It is found in the nucleus. The protein localises to the nucleolus. In terms of biological role, component of the microprocessor complex that acts as a RNA- and heme-binding protein that is involved in the initial step of microRNA (miRNA) biogenesis. Component of the microprocessor complex that is required to process primary miRNA transcripts (pri-miRNAs) to release precursor miRNA (pre-miRNA) in the nucleus. Within the microprocessor complex, DGCR8 function as a molecular anchor necessary for the recognition of pri-miRNA at dsRNA-ssRNA junction and directs DROSHA to cleave 11 bp away form the junction to release hairpin-shaped pre-miRNAs that are subsequently cut by the cytoplasmic DICER to generate mature miRNAs. The heme-bound DGCR8 dimer binds pri-miRNAs as a cooperative trimer (of dimers) and is active in triggering pri-miRNA cleavage, whereas the heme-free DGCR8 monomer binds pri-miRNAs as a dimer and is much less active. Both double-stranded and single-stranded regions of a pri-miRNA are required for its binding. Specifically recognizes and binds N6-methyladenosine (m6A)-containing pri-miRNAs, a modification required for pri-miRNAs processing. Involved in the silencing of embryonic stem cell self-renewal. Plays also a role in DNA repair by promoting the recruitment of RNF168 to RNF8 and MDC1 at DNA double-strand breaks and subsequently the clearance of DNA breaks. The chain is Microprocessor complex subunit DGCR8 (DGCR8) from Bos taurus (Bovine).